The primary structure comprises 314 residues: Putative 4-hydroxy-2-oxoglutarate aldolase, mitochondrial (314 aa).

50–51 (TN) provides a ligand contact to substrate. Lysine 171 functions as the Schiff-base intermediate with substrate in the catalytic mechanism.

This sequence belongs to the DapA family.

It catalyses the reaction (4S)-4-hydroxy-2-oxoglutarate = glyoxylate + pyruvate. It carries out the reaction (4R)-4-hydroxy-2-oxoglutarate = glyoxylate + pyruvate. Its function is as follows. May catalyze the final step in the metabolic pathway of hydroxyproline. This is Putative 4-hydroxy-2-oxoglutarate aldolase, mitochondrial from Coccidioides immitis (strain RS) (Valley fever fungus).